A 561-amino-acid polypeptide reads, in one-letter code: Rho guanine nucleotide exchange factor 9 (561 aa).

One can recognise an SH3 domain in the interval 53 to 112 (DSIVSAEAVWDHVTMANRELAFKAGDVIKVLDASNKDWWWGQIDDEEGWFPASFVRLWVN). The tract at residues 145-155 (RDQMRANVINE) is interaction with GPHN. The region spanning 148–332 (MRANVINEIM…RNVTQQINER (185 aa)) is the DH domain. Positions 363–470 (ELIYTGEMAW…WLRAFREERK (108 aa)) constitute a PH domain. Residues 499–524 (KQKGVNSARSVPPSYPPPQDPLNQGQ) are disordered. At S547 the chain carries Phosphoserine.

In terms of assembly, interacts with GPHN.

The protein resides in the cytoplasm. Its subcellular location is the postsynaptic density. Functionally, acts as a guanine nucleotide exchange factor (GEF) for CDC42. Promotes formation of GPHN clusters. The polypeptide is Rho guanine nucleotide exchange factor 9 (ARHGEF9) (Bos taurus (Bovine)).